Reading from the N-terminus, the 344-residue chain is Dihydroorotase (344 aa).

Residues His-13 and His-15 each coordinate Zn(2+). Residues 15–17 (HFR) and Asn-41 each bind substrate. Residues Lys-98, His-135, and His-173 each coordinate Zn(2+). Lys-98 carries the post-translational modification N6-carboxylysine. His-135 is a binding site for substrate. Leu-218 contacts substrate. Asp-246 contributes to the Zn(2+) binding site. Asp-246 is an active-site residue. 2 residues coordinate substrate: His-250 and Ala-262.

Belongs to the metallo-dependent hydrolases superfamily. DHOase family. Class II DHOase subfamily. In terms of assembly, homodimer. Requires Zn(2+) as cofactor.

It catalyses the reaction (S)-dihydroorotate + H2O = N-carbamoyl-L-aspartate + H(+). It participates in pyrimidine metabolism; UMP biosynthesis via de novo pathway; (S)-dihydroorotate from bicarbonate: step 3/3. Catalyzes the reversible cyclization of carbamoyl aspartate to dihydroorotate. The sequence is that of Dihydroorotase from Shewanella sediminis (strain HAW-EB3).